Here is a 377-residue protein sequence, read N- to C-terminus: Cyclin-I (377 aa).

A disordered region spans residues threonine 356 to methionine 377. The span at proline 367–methionine 377 shows a compositional bias: pro residues.

It belongs to the cyclin family.

The protein is Cyclin-I (Ccni) of Mus musculus (Mouse).